The sequence spans 252 residues: Adenosylcobinamide-GDP ribazoletransferase (252 aa).

7 helical membrane passes run 36–56 (LVPI…MLLV), 59–79 (FFYK…TGGI), 109–129 (VGTN…VILT), 133–153 (PAYM…GSIV), 170–192 (SFID…VIFL), 199–218 (GYII…KYFT), and 228–248 (ILGA…YAVL).

Belongs to the CobS family. It depends on Mg(2+) as a cofactor.

The protein localises to the cell membrane. It carries out the reaction alpha-ribazole + adenosylcob(III)inamide-GDP = adenosylcob(III)alamin + GMP + H(+). The catalysed reaction is alpha-ribazole 5'-phosphate + adenosylcob(III)inamide-GDP = adenosylcob(III)alamin 5'-phosphate + GMP + H(+). It participates in cofactor biosynthesis; adenosylcobalamin biosynthesis; adenosylcobalamin from cob(II)yrinate a,c-diamide: step 7/7. Joins adenosylcobinamide-GDP and alpha-ribazole to generate adenosylcobalamin (Ado-cobalamin). Also synthesizes adenosylcobalamin 5'-phosphate from adenosylcobinamide-GDP and alpha-ribazole 5'-phosphate. This chain is Adenosylcobinamide-GDP ribazoletransferase, found in Clostridium acetobutylicum (strain ATCC 824 / DSM 792 / JCM 1419 / IAM 19013 / LMG 5710 / NBRC 13948 / NRRL B-527 / VKM B-1787 / 2291 / W).